The primary structure comprises 507 residues: Histidine ammonia-lyase (507 aa).

The 5-imidazolinone (Ala-Gly) cross-link spans 141–143; that stretch reads ASG. The residue at position 142 (serine 142) is a 2,3-didehydroalanine (Ser).

It belongs to the PAL/histidase family. Post-translationally, contains an active site 4-methylidene-imidazol-5-one (MIO), which is formed autocatalytically by cyclization and dehydration of residues Ala-Ser-Gly.

The protein resides in the cytoplasm. The catalysed reaction is L-histidine = trans-urocanate + NH4(+). The protein operates within amino-acid degradation; L-histidine degradation into L-glutamate; N-formimidoyl-L-glutamate from L-histidine: step 1/3. This is Histidine ammonia-lyase from Cereibacter sphaeroides (strain KD131 / KCTC 12085) (Rhodobacter sphaeroides).